A 504-amino-acid chain; its full sequence is Arabinose import ATP-binding protein AraG (504 aa).

2 consecutive ABC transporter domains span residues 8–243 (LSFR…MVGR) and 256–499 (YGEE…MPKV). 40–47 (GENGAGKS) serves as a coordination point for ATP.

The protein belongs to the ABC transporter superfamily. Arabinose importer (TC 3.A.1.2.2) family. In terms of assembly, the complex is composed of two ATP-binding proteins (AraG), two transmembrane proteins (AraH) and a solute-binding protein (AraF).

It localises to the cell inner membrane. It carries out the reaction L-arabinose(out) + ATP + H2O = L-arabinose(in) + ADP + phosphate + H(+). Functionally, part of the ABC transporter complex AraFGH involved in arabinose import. Responsible for energy coupling to the transport system. This Escherichia coli O157:H7 protein is Arabinose import ATP-binding protein AraG.